The primary structure comprises 225 residues: GTP cyclohydrolase III (225 aa).

This sequence belongs to the archaeal-type GTP cyclohydrolase family.

The enzyme catalyses GTP + 3 H2O = 2-amino-5-formylamino-6-(5-phospho-D-ribosylamino)pyrimidin-4(3H)-one + 2 phosphate + 2 H(+). Its function is as follows. Catalyzes the formation of 2-amino-5-formylamino-6-ribofuranosylamino-4(3H)-pyrimidinone ribonucleotide monophosphate and inorganic phosphate from GTP. Also has an independent pyrophosphate phosphohydrolase activity. The chain is GTP cyclohydrolase III from Sulfurisphaera tokodaii (strain DSM 16993 / JCM 10545 / NBRC 100140 / 7) (Sulfolobus tokodaii).